The following is a 428-amino-acid chain: Enolase (428 aa).

Residue Gln163 coordinates (2R)-2-phosphoglycerate. Residue Glu205 is the Proton donor of the active site. Residues Asp242, Glu286, and Asp313 each contribute to the Mg(2+) site. Residues Lys338, Arg367, Ser368, and Lys389 each contribute to the (2R)-2-phosphoglycerate site. Catalysis depends on Lys338, which acts as the Proton acceptor.

It belongs to the enolase family. The cofactor is Mg(2+).

The protein resides in the cytoplasm. Its subcellular location is the secreted. It is found in the cell surface. The enzyme catalyses (2R)-2-phosphoglycerate = phosphoenolpyruvate + H2O. Its pathway is carbohydrate degradation; glycolysis; pyruvate from D-glyceraldehyde 3-phosphate: step 4/5. Its function is as follows. Catalyzes the reversible conversion of 2-phosphoglycerate (2-PG) into phosphoenolpyruvate (PEP). It is essential for the degradation of carbohydrates via glycolysis. The sequence is that of Enolase from Bordetella bronchiseptica (strain ATCC BAA-588 / NCTC 13252 / RB50) (Alcaligenes bronchisepticus).